The primary structure comprises 239 residues: Ubiquinone biosynthesis O-methyltransferase (239 aa).

The S-adenosyl-L-methionine site is built by arginine 45, glycine 64, aspartate 85, and methionine 129.

It belongs to the methyltransferase superfamily. UbiG/COQ3 family.

The enzyme catalyses a 3-demethylubiquinol + S-adenosyl-L-methionine = a ubiquinol + S-adenosyl-L-homocysteine + H(+). The catalysed reaction is a 3-(all-trans-polyprenyl)benzene-1,2-diol + S-adenosyl-L-methionine = a 2-methoxy-6-(all-trans-polyprenyl)phenol + S-adenosyl-L-homocysteine + H(+). It participates in cofactor biosynthesis; ubiquinone biosynthesis. Its function is as follows. O-methyltransferase that catalyzes the 2 O-methylation steps in the ubiquinone biosynthetic pathway. This chain is Ubiquinone biosynthesis O-methyltransferase, found in Nitrosospira multiformis (strain ATCC 25196 / NCIMB 11849 / C 71).